The sequence spans 237 residues: tRNA (guanine-N(7)-)-methyltransferase (237 aa).

4 residues coordinate S-adenosyl-L-methionine: glutamate 67, glutamate 92, aspartate 119, and aspartate 141. Aspartate 141 is a catalytic residue. Substrate contacts are provided by residues lysine 145, aspartate 177, and 214-217; that span reads TRYE.

The protein belongs to the class I-like SAM-binding methyltransferase superfamily. TrmB family.

It catalyses the reaction guanosine(46) in tRNA + S-adenosyl-L-methionine = N(7)-methylguanosine(46) in tRNA + S-adenosyl-L-homocysteine. It participates in tRNA modification; N(7)-methylguanine-tRNA biosynthesis. Functionally, catalyzes the formation of N(7)-methylguanine at position 46 (m7G46) in tRNA. This Jannaschia sp. (strain CCS1) protein is tRNA (guanine-N(7)-)-methyltransferase.